The primary structure comprises 478 residues: Glycogen synthase (478 aa).

ADP-alpha-D-glucose is bound at residue K15.

This sequence belongs to the glycosyltransferase 1 family. Bacterial/plant glycogen synthase subfamily.

The enzyme catalyses [(1-&gt;4)-alpha-D-glucosyl](n) + ADP-alpha-D-glucose = [(1-&gt;4)-alpha-D-glucosyl](n+1) + ADP + H(+). It functions in the pathway glycan biosynthesis; glycogen biosynthesis. In terms of biological role, synthesizes alpha-1,4-glucan chains using ADP-glucose. In Enterobacter sp. (strain 638), this protein is Glycogen synthase.